A 354-amino-acid polypeptide reads, in one-letter code: NADH-quinone oxidoreductase subunit H (354 aa).

10 consecutive transmembrane segments (helical) span residues 12-32 (LLGG…LIAP), 62-82 (PWGL…EIIL), 89-109 (GLFL…WVVV), 124-144 (LLFL…AGWA), 162-182 (VSYE…SGTL), 203-223 (FLSW…ISGL), 239-259 (EIVA…FFLA), 263-283 (NMIL…LPPI), 291-311 (IPGW…FLWV), and 326-346 (LGWK…GLWI).

It belongs to the complex I subunit 1 family. As to quaternary structure, NDH-1 is composed of 14 different subunits. Subunits NuoA, H, J, K, L, M, N constitute the membrane sector of the complex.

Its subcellular location is the cell inner membrane. It catalyses the reaction a quinone + NADH + 5 H(+)(in) = a quinol + NAD(+) + 4 H(+)(out). In terms of biological role, NDH-1 shuttles electrons from NADH, via FMN and iron-sulfur (Fe-S) centers, to quinones in the respiratory chain. The immediate electron acceptor for the enzyme in this species is believed to be ubiquinone. Couples the redox reaction to proton translocation (for every two electrons transferred, four hydrogen ions are translocated across the cytoplasmic membrane), and thus conserves the redox energy in a proton gradient. This subunit may bind ubiquinone. This Methylibium petroleiphilum (strain ATCC BAA-1232 / LMG 22953 / PM1) protein is NADH-quinone oxidoreductase subunit H.